The sequence spans 508 residues: Photosystem II CP47 reaction center protein (508 aa).

The next 6 membrane-spanning stretches (helical) occupy residues 21–36 (AVHL…WAGS), 101–115 (IVLS…IWHW), 140–156 (GIHL…FGAF), 203–218 (IAAG…FHLS), 237–252 (VLSS…AFVV), and 457–472 (TFAL…HGAR).

The protein belongs to the PsbB/PsbC family. PsbB subfamily. As to quaternary structure, PSII is composed of 1 copy each of membrane proteins PsbA, PsbB, PsbC, PsbD, PsbE, PsbF, PsbH, PsbI, PsbJ, PsbK, PsbL, PsbM, PsbT, PsbX, PsbY, PsbZ, Psb30/Ycf12, at least 3 peripheral proteins of the oxygen-evolving complex and a large number of cofactors. It forms dimeric complexes. The cofactor is Binds multiple chlorophylls. PSII binds additional chlorophylls, carotenoids and specific lipids..

Its subcellular location is the plastid. The protein localises to the chloroplast thylakoid membrane. Functionally, one of the components of the core complex of photosystem II (PSII). It binds chlorophyll and helps catalyze the primary light-induced photochemical processes of PSII. PSII is a light-driven water:plastoquinone oxidoreductase, using light energy to abstract electrons from H(2)O, generating O(2) and a proton gradient subsequently used for ATP formation. The polypeptide is Photosystem II CP47 reaction center protein (Anthoceros angustus (Hornwort)).